The sequence spans 3312 residues: Cadherin EGF LAG seven-pass G-type receptor 3 (3312 aa).

Residues 1–32 form the signal peptide; it reads MMARRPPWRGLGGRSTPILLLLLLSLFPLSQE. Topologically, residues 33–2540 are extracellular; sequence ELGGGGHQGW…RLEGDLELLA (2508 aa). Disordered regions lie at residues 90 to 112, 143 to 199, and 212 to 306; these read GRRQ…LGIE, GRTG…RKRV, and GSKG…EARK. Positions 159-173 are enriched in low complexity; it reads SSGVPGSGNSSPLPS. A compositionally biased stretch (pro residues) spans 290-299; the sequence is RPGPRPPGLP. Cadherin domains are found at residues 326–433, 434–545, 546–651, 652–756, 757–858, 859–961, 962–1067, 1068–1169, and 1170–1265; these read PQYN…SPVF, EQAQ…APQF, SEKR…IPIF, VSTP…RPEF, TMKE…RPVF, QSAH…APQF, VASH…APVF, PAEE…SPVL, and NNFQ…RVVI. Asn632 is a glycosylation site (N-linked (GlcNAc...) asparagine). N-linked (GlcNAc...) asparagine glycosylation occurs at Asn847. N-linked (GlcNAc...) asparagine glycosylation is found at Asn1182, Asn1222, Asn1317, and Asn1327. The EGF-like 1; calcium-binding domain maps to 1375-1433; the sequence is DDNVCLREPCENYMKCVSVLRFDSSAPFLASASTLFRPIQPIAGLRCRCPPGFTGDFCE. 9 disulfide bridges follow: Cys1379–Cys1390, Cys1384–Cys1421, Cys1423–Cys1432, Cys1439–Cys1450, Cys1444–Cys1459, Cys1461–Cys1470, Cys1479–Cys1490, Cys1484–Cys1500, and Cys1502–Cys1513. One can recognise an EGF-like 2; calcium-binding domain in the interval 1435-1471; that stretch reads ELDLCYSNPCRNGGACARREGGYTCVCRPRFTGEDCE. Positions 1475-1514 constitute an EGF-like 3; calcium-binding domain; it reads EAGRCVPGVCRNGGTCTDAPNGGFRCQCPAGGAFEGPRCE. In terms of domain architecture, Laminin G-like 1 spans 1515–1719; the sequence is VAARSFPPSS…VANNGTMAGC (205 aa). N-linked (GlcNAc...) asparagine glycosylation is found at Asn1649 and Asn1713. Intrachain disulfides connect Cys1693/Cys1719, Cys1726/Cys1737, Cys1731/Cys1746, and Cys1748/Cys1757. The EGF-like 4; calcium-binding domain maps to 1722–1758; that stretch reads KLHFCDSGPCKNSGFCSERWGSFSCDCPVGFGGKDCQ. Residues 1764 to 1944 enclose the Laminin G-like 2 domain; that stretch reads PHHFRGNGTL…SHRVNAEPGC (181 aa). N-linked (GlcNAc...) asparagine glycosylation occurs at Asn1770. 9 disulfide bridges follow: Cys1915–Cys1944, Cys1950–Cys1961, Cys1955–Cys1970, Cys1972–Cys1981, Cys1985–Cys1996, Cys1990–Cys2008, Cys2010–Cys2019, Cys2027–Cys2040, and Cys2042–Cys2052. Residues 1946–1982 form the EGF-like 5; calcium-binding domain; it reads VTNACASGPCPPHADCRDLWQTFSCTCQPGYYGPGCV. At Asp1963 the chain carries (3R)-3-hydroxyaspartate. One can recognise an EGF-like 6; calcium-binding domain in the interval 1983-2020; that stretch reads DACLLNPCQNQGSCRHLPGAPHGYTCDCVGGYFGHHCE. The EGF-like 7; calcium-binding domain maps to 2021–2053; it reads HRMDQQCPRGWWGSPTCGPCNCDVHKGFDPNCN. Asn2053 carries N-linked (GlcNAc...) asparagine glycosylation. The 36-residue stretch at 2055-2090 folds into the EGF-like 8; calcium-binding domain; the sequence is TNGQCHCKEFHYRPRGSDSCLPCDCYPVGSTSRSCA. Intrachain disulfides connect Cys2059/Cys2074, Cys2061/Cys2077, Cys2079/Cys2089, Cys2098/Cys2107, and Cys2110/Cys2122. The Laminin EGF-like domain maps to 2077–2124; it reads CDCYPVGSTSRSCAPHSGQCPCRPGALGRQCNSCDSPFAEVTASGCRV. Tyr2126 bears the Phosphotyrosine mark. Residues Asn2177, Asn2196, Asn2386, Asn2474, and Asn2506 are each glycosylated (N-linked (GlcNAc...) asparagine). The disordered stretch occupies residues 2361–2399; it reads THVLLPSQSPRPSPSEVLPTSSSIENSTTSSVVPPPAPP. One can recognise a GAIN-B domain in the interval 2368-2530; the sequence is QSPRPSPSEV…GVLMDASPRE (163 aa). Residues 2380–2391 are compositionally biased toward low complexity; that stretch reads TSSSIENSTTSS. 2 disulfide bridges follow: Cys2480/Cys2512 and Cys2500/Cys2514. A GPS region spans residues 2480-2530; the sequence is CVQWDPPGLAEQHGVWTARDCELVHRNGSHARCRCSRTGTFGVLMDASPRE. Residues 2541–2561 traverse the membrane as a helical segment; it reads VFTHVVVAVSVAALVLTAAIL. Topologically, residues 2562–2572 are cytoplasmic; that stretch reads LSLRSLKSNVR. The helical transmembrane segment at 2573 to 2593 threads the bilayer; that stretch reads GIHANVAAALGVAELLFLLGI. At 2594 to 2601 the chain is on the extracellular side; sequence HRTHNQLV. The chain crosses the membrane as a helical span at residues 2602–2622; sequence CTAVAILLHYFFLSTFAWLFV. Topologically, residues 2623–2643 are cytoplasmic; the sequence is QGLHLYRMQVEPRNVDRGAMR. Residues 2644–2664 form a helical membrane-spanning segment; sequence FYHALGWGVPAVLLGLAVGLD. Topologically, residues 2665–2681 are extracellular; the sequence is PEGYGNPDFCWISVHEP. The chain crosses the membrane as a helical span at residues 2682 to 2702; it reads LIWSFAGPVVLVIVMNGTMFL. Residues 2703-2725 are Cytoplasmic-facing; it reads LAARTSCSTGQREAKKTSALTLR. The helical transmembrane segment at 2726 to 2746 threads the bilayer; that stretch reads SSFLLLLLVSASWLFGLLAVN. Residues 2747–2753 are Extracellular-facing; it reads HSILAFH. Residues 2754–2774 form a helical membrane-spanning segment; that stretch reads YLHAGLCGLQGLAVLLLFCVL. Topologically, residues 2775 to 3312 are cytoplasmic; the sequence is NADARAAWMP…SEVPRSEGHS (538 aa). Disordered regions lie at residues 2888-2927 and 2978-3006; these read AGAD…QRPL and TSKD…AQRQ. Residues 2890–2900 are compositionally biased toward acidic residues; sequence ADSDSDSDLSL. The residue at position 3051 (Tyr3051) is a Phosphotyrosine. Disordered stretches follow at residues 3086 to 3243 and 3256 to 3312; these read EEAP…TEQL and SALS…EGHS. Residue Ser3097 is modified to Phosphoserine. Composition is skewed to low complexity over residues 3175-3198, 3256-3265, and 3272-3281; these read SPQR…SRSS, SALSSVQSSS, and TTATPSATAS. Polar residues predominate over residues 3287 to 3300; the sequence is TPRSATSHSISELS.

It belongs to the G-protein coupled receptor 2 family. LN-TM7 subfamily.

It localises to the cell membrane. In terms of biological role, receptor that may have an important role in cell/cell signaling during nervous system formation. The sequence is that of Cadherin EGF LAG seven-pass G-type receptor 3 (CELSR3) from Homo sapiens (Human).